Consider the following 330-residue polypeptide: Polygalacturonase inhibitor 1 (330 aa).

Positions 1-21 (MDKTATLCLLFLFTFLTTCLS) are cleaved as a signal peptide. Intrachain disulfides connect cysteine 25-cysteine 55 and cysteine 56-cysteine 63. LRR repeat units follow at residues 69 to 93 (NHRV…VGDL), 94 to 117 (PYLE…TIAK), 118 to 142 (LKNL…ISQL), 143 to 166 (KNLE…LSTL), 167 to 189 (PKIL…SFGS), 191 to 215 (PGTV…LGNI), 217 to 237 (FNRI…LFGS), 238 to 260 (NKTT…KVDI), 261 to 285 (PKTL…WTEA), and 287 to 309 (LQFF…KLQT). 2 N-linked (GlcNAc...) asparagine glycosylation sites follow: asparagine 106 and asparagine 130. The N-linked (GlcNAc...) asparagine glycan is linked to asparagine 238. The N-linked (GlcNAc...) asparagine glycan is linked to asparagine 291. Disulfide bonds link cysteine 298/cysteine 320 and cysteine 322/cysteine 329.

It belongs to the polygalacturonase-inhibiting protein family.

Its subcellular location is the secreted. The protein localises to the cell wall. It is found in the membrane. Functionally, inhibitor of fungal polygalacturonase. It is an important factor for plant resistance to phytopathogenic fungi. This is Polygalacturonase inhibitor 1 (PGIP1) from Arabidopsis thaliana (Mouse-ear cress).